We begin with the raw amino-acid sequence, 251 residues long: Triosephosphate isomerase (251 aa).

Substrate is bound at residue 9-11 (NWK). The Electrophile role is filled by His-94. Glu-166 functions as the Proton acceptor in the catalytic mechanism. Substrate is bound by residues Gly-172, Ser-211, and 232 to 233 (GG).

It belongs to the triosephosphate isomerase family. In terms of assembly, homodimer.

The protein resides in the cytoplasm. It carries out the reaction D-glyceraldehyde 3-phosphate = dihydroxyacetone phosphate. It participates in carbohydrate biosynthesis; gluconeogenesis. It functions in the pathway carbohydrate degradation; glycolysis; D-glyceraldehyde 3-phosphate from glycerone phosphate: step 1/1. In terms of biological role, involved in the gluconeogenesis. Catalyzes stereospecifically the conversion of dihydroxyacetone phosphate (DHAP) to D-glyceraldehyde-3-phosphate (G3P). The polypeptide is Triosephosphate isomerase (Xanthomonas axonopodis pv. citri (strain 306)).